The primary structure comprises 478 residues: Argininosuccinate synthase (478 aa).

ATP-binding positions include 17–25 (AFSGGLDTS) and A43. Position 99 (Y99) interacts with L-citrulline. ATP is bound by residues G129 and T131. 3 residues coordinate L-aspartate: T131, N135, and D136. Residue N135 participates in L-citrulline binding. An ATP-binding site is contributed by D136. L-citrulline is bound by residues R139 and S192. An ATP-binding site is contributed by D194. L-citrulline-binding residues include T201, E203, and E280.

The protein belongs to the argininosuccinate synthase family. Type 2 subfamily. In terms of assembly, homotetramer.

The protein resides in the cytoplasm. The enzyme catalyses L-citrulline + L-aspartate + ATP = 2-(N(omega)-L-arginino)succinate + AMP + diphosphate + H(+). It participates in amino-acid biosynthesis; L-arginine biosynthesis; L-arginine from L-ornithine and carbamoyl phosphate: step 2/3. This Leifsonia xyli subsp. xyli (strain CTCB07) protein is Argininosuccinate synthase.